A 260-amino-acid chain; its full sequence is MSNAADKLVIAGREFSSRLMVGTGKYASNEQMIKALEVSGAEIITVAVRRVNLADRGKGCLLDFIDPKKYTLLPNTAGCYTADDAVRTCRLAREAGMSDLVKLEVLGDEKTLFPDNEELLKAAKILVKEGFTVLPYTSDDPIVCKKLEDIGCAAVMPLGAPIGSGLGIRNPYNILIIKETVKVPVIVDAGVGTASDAAIAMELGIDGVLMNTGIAGARDPIAMAEAMNMAVRAGRLAYLAGRIPKKLYATASSPIEGMIG.

Lys102 functions as the Schiff-base intermediate with DXP in the catalytic mechanism. 1-deoxy-D-xylulose 5-phosphate contacts are provided by residues Gly163, 189 to 190 (AG), and 211 to 212 (NT).

The protein belongs to the ThiG family. Homotetramer. Forms heterodimers with either ThiH or ThiS.

The protein resides in the cytoplasm. It catalyses the reaction [ThiS sulfur-carrier protein]-C-terminal-Gly-aminoethanethioate + 2-iminoacetate + 1-deoxy-D-xylulose 5-phosphate = [ThiS sulfur-carrier protein]-C-terminal Gly-Gly + 2-[(2R,5Z)-2-carboxy-4-methylthiazol-5(2H)-ylidene]ethyl phosphate + 2 H2O + H(+). It functions in the pathway cofactor biosynthesis; thiamine diphosphate biosynthesis. Functionally, catalyzes the rearrangement of 1-deoxy-D-xylulose 5-phosphate (DXP) to produce the thiazole phosphate moiety of thiamine. Sulfur is provided by the thiocarboxylate moiety of the carrier protein ThiS. In vitro, sulfur can be provided by H(2)S. In Geobacter sulfurreducens (strain ATCC 51573 / DSM 12127 / PCA), this protein is Thiazole synthase.